Consider the following 397-residue polypeptide: Putative 3'(2'),5'-bisphosphate nucleotidase, mitochondrial (397 aa).

A mitochondrion-targeting transit peptide spans 1–16 (MYILDTGARFSAVRFS). Residue Asp91 is the Proton acceptor of the active site. Residues Glu114, Asp174, Ile176, and Asp177 each contribute to the Mg(2+) site. Thr179 (proton acceptor) is an active-site residue. Adenosine 3',5'-bisphosphate contacts are provided by Thr179, Ser305, Lys308, and Asp334. AMP-binding residues include Ser305, Lys308, and Asp334. Residue Asp334 coordinates Mg(2+).

It belongs to the inositol monophosphatase superfamily. Mg(2+) serves as cofactor.

The protein resides in the mitochondrion. The enzyme catalyses 3'-phosphoadenylyl sulfate + H2O = adenosine 5'-phosphosulfate + phosphate. The catalysed reaction is adenosine 3',5'-bisphosphate + H2O = AMP + phosphate. It catalyses the reaction adenosine 2',5'-bisphosphate + H2O = AMP + phosphate. In terms of biological role, phosphatase that converts adenosine 3'-phosphate 5'-phosphosulfate (PAPS) to adenosine 5'-phosphosulfate (APS) and 3'(2')-phosphoadenosine 5'-phosphate (PAP) to AMP. This Arabidopsis thaliana (Mouse-ear cress) protein is Putative 3'(2'),5'-bisphosphate nucleotidase, mitochondrial.